The sequence spans 501 residues: uncharacterized protein (501 aa).

One can recognise a BAR domain in the interval Glu14 to Asn237. The residue at position 285 (Thr285) is a Phosphothreonine. Disordered stretches follow at residues Ile302–Asp321 and Ser329–Ser414. Basic and acidic residues predominate over residues Gln309–Ser320. Residues Ser390–Ser402 show a composition bias toward polar residues. At Ser414 the chain carries Phosphoserine. The 67-residue stretch at Ser421–Pro487 folds into the SH3 domain.

Its subcellular location is the cytoplasm. This is an uncharacterized protein from Schizosaccharomyces pombe (strain 972 / ATCC 24843) (Fission yeast).